Here is a 406-residue protein sequence, read N- to C-terminus: D-alanyl-D-alanine carboxypeptidase (406 aa).

Residues 1–31 form the signal peptide; it reads MVSGTVGRGTALGAVLLALLAVPAQAGTAAA. Residue Ser-93 is the Acyl-ester intermediate of the active site. Substrate-binding positions include 151 to 154, 190 to 192, Arg-316, 330 to 332, and 357 to 358; these read FAQT, YSN, TGT, and SN. Positions 381–406 are excised as a propeptide; it reads AKLRSATSSATTVERHEDIAPGIARD. The interval 387–406 is disordered; sequence TSSATTVERHEDIAPGIARD. Positions 393-406 are enriched in basic and acidic residues; sequence VERHEDIAPGIARD.

The protein belongs to the peptidase S12 family.

It localises to the secreted. It catalyses the reaction Preferential cleavage: (Ac)2-L-Lys-D-Ala-|-D-Ala. Also transpeptidation of peptidyl-alanyl moieties that are N-acyl substituents of D-alanine.. It participates in cell wall biogenesis; peptidoglycan biosynthesis. Its function is as follows. Catalyzes distinct carboxypeptidation and transpeptidation reactions during the last stages of wall peptidoglycan synthesis. Mistaking a beta-lactam antibiotic molecule for a normal substrate (i.e. a D-alanyl-D-alanine-terminated peptide), it becomes immobilized in the form of a long-lived, serine-ester-linked acyl enzyme and thus behave as penicillin-binding protein (PBP). The sequence is that of D-alanyl-D-alanine carboxypeptidase from Streptomyces sp. (strain R61).